The chain runs to 75 residues: Putative UPF0377 protein YAL067W-A (75 aa).

It belongs to the UPF0377 family.

The protein is Putative UPF0377 protein YAL067W-A of Saccharomyces cerevisiae (strain ATCC 204508 / S288c) (Baker's yeast).